The primary structure comprises 130 residues: Small ribosomal subunit protein uS9 (130 aa).

It belongs to the universal ribosomal protein uS9 family.

This Streptococcus mutans serotype c (strain ATCC 700610 / UA159) protein is Small ribosomal subunit protein uS9.